Consider the following 259-residue polypeptide: MNHLDKNAKKSLGQNFLRDKNIINKIVNVFNIENEKVLEIGPGQGDLTKELLKKAKKVLAFEIDKSLIEHLKNEIKDLHFELRDQDFLNVNLNDDEFKDYYVVANIPYYITSDILLKIYRSFWNFKGIVLMVQKEVAQRIVAQKNSKNYSKLSISSQYLADVKIEFIVNKNSFIPAPKVDSAVISLKFKDNIDKENLEKMLKFFLVCFANRRKKLTFTLNRNFNSTKVKLAYEKLNLSDNARIQELDVSQIVLLFTYLN.

Asn-15, Leu-17, Gly-41, Glu-62, Asp-86, and Asn-105 together coordinate S-adenosyl-L-methionine.

The protein belongs to the class I-like SAM-binding methyltransferase superfamily. rRNA adenine N(6)-methyltransferase family. RsmA subfamily.

The protein localises to the cytoplasm. It catalyses the reaction adenosine(1518)/adenosine(1519) in 16S rRNA + 4 S-adenosyl-L-methionine = N(6)-dimethyladenosine(1518)/N(6)-dimethyladenosine(1519) in 16S rRNA + 4 S-adenosyl-L-homocysteine + 4 H(+). Its function is as follows. Specifically dimethylates two adjacent adenosines (A1518 and A1519) in the loop of a conserved hairpin near the 3'-end of 16S rRNA in the 30S particle. May play a critical role in biogenesis of 30S subunits. The sequence is that of Ribosomal RNA small subunit methyltransferase A from Mycoplasmopsis synoviae (strain 53) (Mycoplasma synoviae).